We begin with the raw amino-acid sequence, 712 residues long: MFVRTCRSSCNAWTNATSTTQAGSLLPPNAHRSVVLTLSLQACSARTHESLIRSFASTTSQSKRQEAEAEEKRQVSPRLGPSAPRSSYPSSAEARQKRDSDREFLISVLESSATKRDARGYLQTFGSSAALTSAGQKKPSTIGILGVPASVAGRPAFVQGTEKEISVKRNEAPHVAVVKLRAPQAWDDVLLEGVAKTLTRLRDLGLLSVIVLDCDDIKPNQASSWHETVTEQTDRLLRAIGQYGFPAAEVVDSGIWKSTENPQIPSSVPSNPLYVGFGKAFTTPLANGHILVVPPRAYSDASLQYSKADANDIVIALTTFFAGLQFGQQSSDYRQLAEKVSDGQSFRKALVDRVIVIDPLGGIPSHRQGHGTQVFINLEDEFKNIQDALYEKTQPTSAGTKDAGVSARATVHLENLRLAKSTLALLPSNASVVMTSPAEAANINVSRRNQLEAKPDGFAGEVKTRTWRNPLIHNLLTDRPIYSSSLPIGRIKPTHQDEEIALSRMPTTTLAKRGLPVTIFPDPRVNRWQPPQPGVPRLRLTDTCIDLPRLVHLINDSFGRKLNVEHYLDRVKDSLAGIIIAGEYEGGAILTWETPFGLDEETAYRKGRLVPYLDKFAVLRKSQGAGGVADIVFNAMVRDAFPDGVCWRSRKDNPVNKWYFERSRGVLKLPESNWAMFWTTPEAVSNDQMMRDYEDVCRNIAPSWADTTKPAD.

Residues 1 to 47 constitute a mitochondrion transit peptide; the sequence is MFVRTCRSSCNAWTNATSTTQAGSLLPPNAHRSVVLTLSLQACSART. Positions 55–99 are disordered; that stretch reads FASTTSQSKRQEAEAEEKRQVSPRLGPSAPRSSYPSSAEARQKRD. Positions 63-74 are enriched in basic and acidic residues; it reads KRQEAEAEEKRQ. Over residues 81–93 the composition is skewed to low complexity; the sequence is PSAPRSSYPSSAE. The 169-residue stretch at 534-702 folds into the N-acetyltransferase domain; the sequence is GVPRLRLTDT…YEDVCRNIAP (169 aa).

The protein belongs to the acetyltransferase family.

It is found in the mitochondrion. The enzyme catalyses L-glutamate + acetyl-CoA = N-acetyl-L-glutamate + CoA + H(+). It participates in amino-acid biosynthesis; L-arginine biosynthesis; N(2)-acetyl-L-ornithine from L-glutamate: step 1/4. Inhibited by arginine. N-acetylglutamate synthase involved in arginine biosynthesis. This Neurospora crassa (strain ATCC 24698 / 74-OR23-1A / CBS 708.71 / DSM 1257 / FGSC 987) protein is Amino-acid acetyltransferase, mitochondrial (arg-14).